Consider the following 189-residue polypeptide: HTH-type transcriptional repressor LfrR (189 aa).

Residues 12 to 70 enclose the HTH tetR-type domain; the sequence is ERTRRAILDAAMLVLADHPTAALGDIAAAAGVGRSTVHRYYPERTDLLRALARHVHDLS. A DNA-binding region (H-T-H motif) is located at residues 33–52; the sequence is ALGDIAAAAGVGRSTVHRYY. A proflavine binding region spans residues 70–71; the sequence is SN.

In terms of assembly, homodimer. Forms a structurally asymmetric homodimer exhibiting local unfolding and a blocked drug-binding site.

With respect to regulation, repressor activity is regulated by binding of different substrates of the LfrA multidrug efflux pump, such as acriflavine, proflavine, ethidium bromide and rhodamine 123. Binding of these ligands causes the dissociation of LfrR from the promoter, inducing lfrA expression. In terms of biological role, represses the transcription of the lfrRA operon by binding directly to the promoter region of lfrR-lfrA. Binds specifically to a 143-bp region upstream of the lfrR gene. The sequence is that of HTH-type transcriptional repressor LfrR from Mycolicibacterium smegmatis (strain ATCC 700084 / mc(2)155) (Mycobacterium smegmatis).